A 302-amino-acid chain; its full sequence is Recombination-associated protein RdgC (302 aa).

The protein belongs to the RdgC family.

It is found in the cytoplasm. The protein resides in the nucleoid. In terms of biological role, may be involved in recombination. The protein is Recombination-associated protein RdgC of Xanthomonas campestris pv. campestris (strain 8004).